We begin with the raw amino-acid sequence, 158 residues long: Transcription elongation factor GreA (158 aa).

The segment covering 24–43 (DVERPKASEAIGEARDKGDL) has biased composition (basic and acidic residues). The disordered stretch occupies residues 24–47 (DVERPKASEAIGEARDKGDLSENA). Residues 48-68 (EYDAAKEAQGLLEMKISKMEE) are a coiled coil.

It belongs to the GreA/GreB family.

Its function is as follows. Necessary for efficient RNA polymerase transcription elongation past template-encoded arresting sites. The arresting sites in DNA have the property of trapping a certain fraction of elongating RNA polymerases that pass through, resulting in locked ternary complexes. Cleavage of the nascent transcript by cleavage factors such as GreA or GreB allows the resumption of elongation from the new 3'terminus. GreA releases sequences of 2 to 3 nucleotides. The polypeptide is Transcription elongation factor GreA (Christiangramia forsetii (strain DSM 17595 / CGMCC 1.15422 / KT0803) (Gramella forsetii)).